The primary structure comprises 455 residues: Venom prothrombin activator notecarin-D1 (455 aa).

Residues 1-20 form the signal peptide; it reads MAPQLLLCLILTFLWSLPEA. Positions 21 to 40 are excised as a propeptide; that stretch reads ESNVFLKSKVANRFLQRTKR. One can recognise a Gla domain in the interval 41–86; it reads SNSLFEEIRPGNIERECIEEKCSKEEAREVFEDNEKTETFWNVYVD. Residues Glu46, Glu47, Glu54, Glu56, Glu59, Glu60, Glu65, Glu66, Glu69, Glu72, and Glu75 each carry the 4-carboxyglutamate modification. Cys57 and Cys62 form a disulfide bridge. The EGF-like 1; calcium-binding domain occupies 86-122; it reads DGDQCSSNPCHYRGTCKDGIGSYTCTCLPNYEGKNCE. Intrachain disulfides connect Cys90-Cys101, Cys95-Cys110, Cys112-Cys121, Cys129-Cys140, Cys136-Cys149, Cys151-Cys164, Cys172-Cys328, Cys216-Cys221, Cys236-Cys252, Cys376-Cys390, and Cys401-Cys429. Ser92 carries O-linked (Hex...) serine glycosylation. The region spanning 129-164 is the EGF-like 2 domain; sequence CRVDNGNCWHFCKRVQSETQCSCAESYRLGVDGHSC. A propeptide spans 182–209 (activation peptide); sequence REASLPDFVQSQKATLLKKSDNPSPDIR. Positions 210–453 constitute a Peptidase S1 domain; sequence IVNGMDCKLG…FIPWIKKIMS (244 aa). His251 functions as the Charge relay system in the catalytic mechanism. Residue Asn254 is glycosylated (N-linked (GlcNAc...) asparagine). Catalysis depends on Asp308, which acts as the Charge relay system. Catalysis depends on Ser405, which acts as the Charge relay system.

It belongs to the peptidase S1 family. Snake venom subfamily. As to quaternary structure, heterodimer of a light chain and a heavy chain; disulfide-linked. Gamma-carboxyglutamate residues are formed by vitamin K dependent carboxylation. These residues are essential for the binding of calcium. As to expression, expressed by the venom gland.

Its subcellular location is the secreted. The enzyme catalyses Selective cleavage of Arg-|-Thr and then Arg-|-Ile bonds in prothrombin to form thrombin.. Functionally, snake prothrombin activator that attacks the hemostatic system of prey. This protein is functionally similar to blood coagulation factor Xa. The polypeptide is Venom prothrombin activator notecarin-D1 (Notechis scutatus scutatus (Mainland tiger snake)).